The following is a 167-amino-acid chain: NAD(P)H-quinone oxidoreductase subunit J (167 aa).

The protein belongs to the complex I 30 kDa subunit family. As to quaternary structure, NDH-1 can be composed of about 15 different subunits; different subcomplexes with different compositions have been identified which probably have different functions.

It localises to the cellular thylakoid membrane. The catalysed reaction is a plastoquinone + NADH + (n+1) H(+)(in) = a plastoquinol + NAD(+) + n H(+)(out). It catalyses the reaction a plastoquinone + NADPH + (n+1) H(+)(in) = a plastoquinol + NADP(+) + n H(+)(out). Functionally, NDH-1 shuttles electrons from an unknown electron donor, via FMN and iron-sulfur (Fe-S) centers, to quinones in the respiratory and/or the photosynthetic chain. The immediate electron acceptor for the enzyme in this species is believed to be plastoquinone. Couples the redox reaction to proton translocation, and thus conserves the redox energy in a proton gradient. Cyanobacterial NDH-1 also plays a role in inorganic carbon-concentration. This chain is NAD(P)H-quinone oxidoreductase subunit J, found in Microcystis aeruginosa (strain NIES-843 / IAM M-2473).